A 1041-amino-acid chain; its full sequence is Protein EGT2 (1041 aa).

An N-terminal signal peptide occupies residues 1–20 (MNKLLLHLVRVISILGLANA). Residues Asn-65, Asn-103, Asn-161, Asn-175, Asn-249, Asn-332, Asn-401, Asn-435, Asn-465, Asn-485, Asn-506, Asn-526, Asn-544, and Asn-556 are each glycosylated (N-linked (GlcNAc...) asparagine). The segment at 388–410 (SSSSISLSAPSSSNSTFTTPSSS) is disordered. The stretch at 457–492 (SSTLSYTSNVTISVSSATQHTTTPSYVSNSTTLSSS) is repeat 1. The interval 457 to 962 (SSTLSYTSNV…TLKTSTFQKA (506 aa)) is 9 X approximate repeats. 2 repeat units span residues 577–606 (TVAS…ISTI) and 613–647 (SGTD…INTN). N-linked (GlcNAc...) asparagine glycans are attached at residues Asn-635, Asn-636, Asn-657, and Asn-709. Repeat 4 spans residues 716 to 745 (TDKSDTYSVISSTESAQVTEYDSLLPISTL). Asn-756 is a glycosylation site (N-linked (GlcNAc...) asparagine). 5 repeat units span residues 773–802 (TDKG…ISTL), 811–840 (TDES…ISTL), 849–886 (TGES…TSLS), 887–924 (TEES…TSLS), and 925–962 (TEES…FQKA). Gly-1020 is lipidated: GPI-anchor amidated glycine. A propeptide spans 1021–1041 (AAGQLTIRIGSLLLGLISFLL) (removed in mature form).

In terms of processing, the GPI-anchor is attached to the protein in the endoplasmic reticulum and serves to target the protein to the cell surface. There, the glucosamine-inositol phospholipid moiety is cleaved off and the GPI-modified mannoprotein is covalently attached via its lipidless GPI glycan remnant to the 1,6-beta-glucan of the outer cell wall layer.

It is found in the secreted. The protein localises to the cell wall. The protein resides in the membrane. Seems to be involved in the correct timing of cell separation after cytokinesis, as separation of mutant daughter cells is delayed. Could either be an enzyme necessary for glucans-degradation of the cell wall at the neck region between mother and daughter cells or a regulatory protein controlling this metabolic step. This Saccharomyces cerevisiae (strain ATCC 204508 / S288c) (Baker's yeast) protein is Protein EGT2 (EGT2).